The primary structure comprises 450 residues: MGKYFGTDGVRGEANVELTPELAFKLGRFGGYVLSQHETERPRVFVARDTRISGEMLEAALIAGLLSVGIEVYKLGVLATPGVSYLVRTEKASAGVMISASHNPALDNGIKFFGSDGFKLADEQELEIEALLDAKKDLLPRPSAEGLGALVDYPEGLRKYERFLVTTGADLDGLKIALDTANGAASVSARNVFLDLNADITVIGENPNGLNINDGIGSTHPEKLQELMTETASDIGLAFDGDSDRLIAVDENGAIVDGDKIMFIIGKYLSEKGLLAKNTIVTTVMSNLGFHKALDSCGIHKKVTAVGDRYVVEEMRQFGYNLGGEQSGHVIIMDYNTTGDGQLTAVQLTKIMKETGKTLSELASEVTIYPQKLVNIRVDNSMKERAMEVPAIAEVIAQMEGEMAGNGRILVRPSGTEPLLRVMAEAPSNEEVDYYVDTIAAVVRAEIGLD.

The active-site Phosphoserine intermediate is S101. The Mg(2+) site is built by S101, D240, D242, and D244. A Phosphoserine modification is found at S101.

This sequence belongs to the phosphohexose mutase family. Mg(2+) is required as a cofactor. Post-translationally, activated by phosphorylation.

It catalyses the reaction alpha-D-glucosamine 1-phosphate = D-glucosamine 6-phosphate. In terms of biological role, catalyzes the conversion of glucosamine-6-phosphate to glucosamine-1-phosphate. The protein is Phosphoglucosamine mutase of Streptococcus equi subsp. zooepidemicus (strain H70).